We begin with the raw amino-acid sequence, 421 residues long: Serine--tRNA ligase (421 aa).

An L-serine-binding site is contributed by 225 to 227 (TAE). ATP is bound by residues 256-258 (RSE) and Val272. An L-serine-binding site is contributed by Glu279. Residue 345–348 (ETHS) participates in ATP binding. L-serine is bound at residue Thr380.

Belongs to the class-II aminoacyl-tRNA synthetase family. Type-1 seryl-tRNA synthetase subfamily. In terms of assembly, homodimer. A single tRNA molecule binds across the dimer.

The protein resides in the cytoplasm. The catalysed reaction is tRNA(Ser) + L-serine + ATP = L-seryl-tRNA(Ser) + AMP + diphosphate + H(+). The enzyme catalyses tRNA(Sec) + L-serine + ATP = L-seryl-tRNA(Sec) + AMP + diphosphate + H(+). The protein operates within aminoacyl-tRNA biosynthesis; selenocysteinyl-tRNA(Sec) biosynthesis; L-seryl-tRNA(Sec) from L-serine and tRNA(Sec): step 1/1. Catalyzes the attachment of serine to tRNA(Ser). Is also probably able to aminoacylate tRNA(Sec) with serine, to form the misacylated tRNA L-seryl-tRNA(Sec), which will be further converted into selenocysteinyl-tRNA(Sec). This Thermus thermophilus (strain ATCC BAA-163 / DSM 7039 / HB27) protein is Serine--tRNA ligase (serS).